A 235-amino-acid chain; its full sequence is Urease accessory protein UreF (235 aa).

This sequence belongs to the UreF family. As to quaternary structure, ureD, UreF and UreG form a complex that acts as a GTP-hydrolysis-dependent molecular chaperone, activating the urease apoprotein by helping to assemble the nickel containing metallocenter of UreC. The UreE protein probably delivers the nickel.

The protein localises to the cytoplasm. Its function is as follows. Required for maturation of urease via the functional incorporation of the urease nickel metallocenter. The protein is Urease accessory protein UreF of Pseudoalteromonas translucida (strain TAC 125).